Consider the following 380-residue polypeptide: MDSTAQQFPLNHDLQVQKDQKGVVEEDEEQIHKRIRNYESHSGFSEYCTLFGHEKSVTCVSVSPNKRWIATSSSDGTIKIWSALTFRLECTLFGHYRGISQVKWATGSKYLASASDDKTIRIWDFEKRCSVRCLKGHTNYVSSIDFNPLGTLLVSGSWDETVRIWNLQDGTCLRMLPAHSEPIISVSISADGTLCATASYDGMARIWDVLSGQCLKTLVEPINVPLSNLQFTENRKYLLVSNLNSQIRLWDYRRNRVVRIFDSHVNTRYSMSWDCYSSKNIPKNTEALPNNDSSYPDDAESFMHDAYLLIPSEDGTIQITDPSTKIIIDDSIRHSDDPETSLLNVTSLGPFIITSGTDPYVRVWAPSLLLSKHEKDGFSP.

7 WD repeats span residues 52–91 (GHEKSVTCVSVSPNKRWIATSSSDGTIKIWSALTFRLECT), 94–133 (GHYRGISQVKWATGSKYLASASDDKTIRIWDFEKRCSVRC), 136–177 (GHTN…RMLP), 179–219 (HSEP…KTLV), 221–262 (PINV…RIFD), 291–330 (NDSSYPDDAESFMHDAYLLIPSEDGTIQITDPSTKIIIDD), and 335–374 (SDDPETSLLNVTSLGPFIITSGTDPYVRVWAPSLLLSKHE). A Phosphoserine modification is found at serine 379.

As to quaternary structure, component of the Set1 complex composed of ash2, sdc1, set1, shg1, spp1, swd1, swd2 and swd3.

The protein localises to the nucleus. Functionally, the Set1 complex specifically methylates 'Lys-4' of histone H3. In Schizosaccharomyces pombe (strain 972 / ATCC 24843) (Fission yeast), this protein is Set1 complex component swd3.